Consider the following 446-residue polypeptide: Putative ZDHHC-type palmitoyltransferase 2 (446 aa).

Disordered stretches follow at residues 1 to 33 and 56 to 83; these read MNLY…INNN and QIIN…HNNP. N-linked (GlcNAc...) asparagine glycosylation is found at N5, N8, N14, and N21. A compositionally biased stretch (low complexity) spans 56–81; it reads QIINKNNNNNHNRNNNNNNNNNNNHN. N141, N145, N159, and N165 each carry an N-linked (GlcNAc...) asparagine glycan. Helical transmembrane passes span 178 to 198, 210 to 230, 305 to 325, 349 to 369, and 410 to 430; these read IVIF…IFPW, IHSF…YLCS, YFVL…TLLI, LFLL…IMAL, and IISN…LPTI. One can recognise a DHHC domain in the interval 261-311; that stretch reads KWCNKCNHQKPERAHHCRYCNRCVLRMDHHCQWLQNCIGLFNQKYFVLFLF.

This sequence belongs to the DHHC palmitoyltransferase family.

It is found in the membrane. The catalysed reaction is L-cysteinyl-[protein] + hexadecanoyl-CoA = S-hexadecanoyl-L-cysteinyl-[protein] + CoA. This is Putative ZDHHC-type palmitoyltransferase 2 from Dictyostelium discoideum (Social amoeba).